The following is a 280-amino-acid chain: Pantothenate synthetase (280 aa).

Position 30 to 37 (30 to 37 (MGYLHEGH)) interacts with ATP. The active-site Proton donor is the H37. Q61 is a (R)-pantoate binding site. Q61 contacts beta-alanine. Residue 147-150 (GQKD) coordinates ATP. Residue Q153 participates in (R)-pantoate binding. Residues V176 and 184–187 (MSSR) contribute to the ATP site.

It belongs to the pantothenate synthetase family. As to quaternary structure, homodimer.

It is found in the cytoplasm. It catalyses the reaction (R)-pantoate + beta-alanine + ATP = (R)-pantothenate + AMP + diphosphate + H(+). The protein operates within cofactor biosynthesis; (R)-pantothenate biosynthesis; (R)-pantothenate from (R)-pantoate and beta-alanine: step 1/1. Catalyzes the condensation of pantoate with beta-alanine in an ATP-dependent reaction via a pantoyl-adenylate intermediate. The chain is Pantothenate synthetase from Thermosipho melanesiensis (strain DSM 12029 / CIP 104789 / BI429).